A 503-amino-acid polypeptide reads, in one-letter code: Rhomboid-type serine protease 2 (503 aa).

Residues 1-11 (MAAQSYYNGAY) are compositionally biased toward polar residues. Residues 1-66 (MAAQSYYNGA…SLRYSQQSIG (66 aa)) are disordered. At 1 to 136 (MAAQSYYNGA…QKKKGFFQKK (136 aa)) the chain is on the cytoplasmic side. The helical transmembrane segment at 137–157 (IAYVTYILTIAQIIVFIVELV) threads the bilayer. Residues 158 to 253 (KMGQLTGSPI…DKPAPDQWFR (96 aa)) lie on the Extracellular side of the membrane. Residues 254-274 (FIIPMFLHSGFVHIGFNLLVQ) traverse the membrane as a helical segment. The Cytoplasmic segment spans residues 275–283 (MTMGADMER). A helical membrane pass occupies residues 284–304 (MIGWWRYGLVYLSSGIWGFVL). Over 305–316 (GGNYAGQGEASC) the chain is Extracellular. A helical transmembrane segment spans residues 317 to 337 (GCSGALFGILALFVLDLLYGW). Ser319 acts as the Nucleophile in catalysis. At 338–342 (NDRQN) the chain is on the cytoplasmic side. A helical transmembrane segment spans residues 343–363 (PWVELIIMVLGIAVSFVLGLL). Over 364–365 (PG) the chain is Extracellular. The chain crosses the membrane as a helical span at residues 366–386 (LDNFSHLGGFTMGLALGLCVM). His371 is an active-site residue. The Cytoplasmic segment spans residues 387 to 449 (RSPNALRERI…FAGRKPLWWA (63 aa)). Residues 450-470 (WWLVRLGALVAVLIGFILLIV) traverse the membrane as a helical segment. Over 471-503 (NFYKYPSSNCSWCYRFSCLPVNGWCDQGNLFSR) the chain is Extracellular.

It belongs to the peptidase S54 family.

The protein localises to the membrane. It carries out the reaction Cleaves type-1 transmembrane domains using a catalytic dyad composed of serine and histidine that are contributed by different transmembrane domains.. Functionally, probable rhomboid-type serine protease that catalyzes intramembrane proteolysis. In Emericella nidulans (strain FGSC A4 / ATCC 38163 / CBS 112.46 / NRRL 194 / M139) (Aspergillus nidulans), this protein is Rhomboid-type serine protease 2.